A 213-amino-acid polypeptide reads, in one-letter code: Uridine kinase (213 aa).

15 to 22 serves as a coordination point for ATP; sequence GASASGKS.

The protein belongs to the uridine kinase family.

The protein localises to the cytoplasm. The catalysed reaction is uridine + ATP = UMP + ADP + H(+). It catalyses the reaction cytidine + ATP = CMP + ADP + H(+). The protein operates within pyrimidine metabolism; CTP biosynthesis via salvage pathway; CTP from cytidine: step 1/3. It functions in the pathway pyrimidine metabolism; UMP biosynthesis via salvage pathway; UMP from uridine: step 1/1. The polypeptide is Uridine kinase (Yersinia enterocolitica serotype O:8 / biotype 1B (strain NCTC 13174 / 8081)).